A 92-amino-acid polypeptide reads, in one-letter code: UPF0213 protein M28_Spy1146 (92 aa).

The GIY-YIG domain maps to 4–80 (KKAYMYVLEC…KRKTRSQKLA (77 aa)).

The protein belongs to the UPF0213 family.

The chain is UPF0213 protein M28_Spy1146 from Streptococcus pyogenes serotype M28 (strain MGAS6180).